A 239-amino-acid chain; its full sequence is Aspartate/glutamate leucyltransferase (239 aa).

The protein belongs to the R-transferase family. Bpt subfamily.

The protein localises to the cytoplasm. It catalyses the reaction N-terminal L-glutamyl-[protein] + L-leucyl-tRNA(Leu) = N-terminal L-leucyl-L-glutamyl-[protein] + tRNA(Leu) + H(+). It carries out the reaction N-terminal L-aspartyl-[protein] + L-leucyl-tRNA(Leu) = N-terminal L-leucyl-L-aspartyl-[protein] + tRNA(Leu) + H(+). In terms of biological role, functions in the N-end rule pathway of protein degradation where it conjugates Leu from its aminoacyl-tRNA to the N-termini of proteins containing an N-terminal aspartate or glutamate. The chain is Aspartate/glutamate leucyltransferase from Campylobacter jejuni subsp. jejuni serotype O:23/36 (strain 81-176).